The following is an 859-amino-acid chain: Envelope glycoprotein gp160 (859 aa).

An N-terminal signal peptide occupies residues 1-28; sequence METQRNYPSLWRWGTLILGMLLICSVVG. Topologically, residues 29 to 687 are extracellular; that stretch reads NLWVTVYYGV…ITNWLWYIRI (659 aa). A disulfide bond links cysteine 50 and cysteine 70. N-linked (GlcNAc...) asparagine; by host glycans are attached at residues asparagine 84, asparagine 131, asparagine 134, asparagine 139, asparagine 140, asparagine 154, asparagine 158, asparagine 188, asparagine 200, asparagine 237, asparagine 244, asparagine 265, asparagine 280, asparagine 299, asparagine 305, asparagine 335, asparagine 342, and asparagine 358. 5 cysteine pairs are disulfide-bonded: cysteine 115–cysteine 208, cysteine 122–cysteine 199, cysteine 127–cysteine 155, cysteine 221–cysteine 250, and cysteine 231–cysteine 242. The interval 127-154 is V1; the sequence is CSSVNATNVTKSNNSTDINIGEIQEQRN. The interval 155–199 is V2; that stretch reads CSFNVTTAIRDKNQKVHALFYRADIVQIDEGERNKSDNHYRLINC. The V3 stretch occupies residues 300 to 333; that stretch reads CTRTGNNTRKSIRIGPGQAFYATGDIIGDIRRAY. A disulfide bridge links cysteine 300 with cysteine 334. The CD4-binding loop stretch occupies residues 366 to 376; the sequence is PAGGDIEIITH. 2 disulfides stabilise this stretch: cysteine 380–cysteine 450 and cysteine 387–cysteine 423. The tract at residues 387 to 423 is V4; that stretch reads CNTTKLFNSTWTNSSYTNDTYNSNSTEDITGNITLQC. N-linked (GlcNAc...) asparagine; by host glycans are attached at residues asparagine 388, asparagine 394, asparagine 399, asparagine 404, asparagine 410, asparagine 418, asparagine 447, asparagine 453, asparagine 464, and asparagine 468. Residues 466–474 are V5; the sequence is TNNVTFRPG. The segment at 515 to 535 is fusion peptide; sequence AVGMGAFFLGFLGAAGSTMGA. The interval 577–595 is immunosuppression; the sequence is KQLQARVLAVERYLKDQQL. A disulfide bridge links cysteine 601 with cysteine 607. Asparagine 614, asparagine 619, asparagine 628, and asparagine 640 each carry an N-linked (GlcNAc...) asparagine; by host glycan. A coiled-coil region spans residues 636–670; that stretch reads KQINNYTDEIYRLLEVSQNQQEKNEQDLLALDKWA. Residues 665 to 686 are MPER; binding to GalCer; the sequence is ALDKWANLWNWFSITNWLWYIR. A helical transmembrane segment spans residues 688–708; sequence FIMIVGGIIGLRIVFAVLSIV. Topologically, residues 709 to 859 are cytoplasmic; the sequence is NRVRQGYSPL…IRQGFERALL (151 aa). The short motif at 715 to 718 is the YXXL motif; contains endocytosis signal element; it reads YSPL. The segment at 724 to 743 is disordered; it reads IPNQRGPDRPREIEEEGGEQ. Cysteine 767 is lipidated: S-palmitoyl cysteine; by host. The short motif at 858–859 is the Di-leucine internalization motif element; sequence LL.

Belongs to the HIV-1 env protein family. The mature envelope protein (Env) consists of a homotrimer of non-covalently associated gp120-gp41 heterodimers. The resulting complex protrudes from the virus surface as a spike. There seems to be as few as 10 spikes on the average virion. Interacts with host CD4, CCR5 and CXCR4. Gp120 also interacts with the C-type lectins CD209/DC-SIGN and CLEC4M/DC-SIGNR (collectively referred to as DC-SIGN(R)). Gp120 and gp41 interact with GalCer. Gp120 interacts with host ITGA4/ITGB7 complex; on CD4+ T-cells, this interaction results in rapid activation of integrin ITGAL/LFA-1, which facilitates efficient cell-to-cell spreading of HIV-1. Gp120 interacts with cell-associated heparan sulfate; this interaction increases virus infectivity on permissive cells and may be involved in infection of CD4- cells. As to quaternary structure, the mature envelope protein (Env) consists of a homotrimer of non-covalently associated gp120-gp41 heterodimers. The resulting complex protrudes from the virus surface as a spike. There seems to be as few as 10 spikes on the average virion. In terms of processing, highly glycosylated by host. The high number of glycan on the protein is reffered to as 'glycan shield' because it contributes to hide protein sequence from adaptive immune system. Palmitoylation of the transmembrane protein and of Env polyprotein (prior to its proteolytic cleavage) is essential for their association with host cell membrane lipid rafts. Palmitoylation is therefore required for envelope trafficking to classical lipid rafts, but not for viral replication. Post-translationally, specific enzymatic cleavages in vivo yield mature proteins. Envelope glycoproteins are synthesized as an inactive precursor that is heavily N-glycosylated and processed likely by host cell furin in the Golgi to yield the mature SU and TM proteins. The cleavage site between SU and TM requires the minimal sequence [KR]-X-[KR]-R. About 2 of the 9 disulfide bonds of gp41 are reduced by P4HB/PDI, following binding to CD4 receptor.

It localises to the virion membrane. The protein resides in the host cell membrane. The protein localises to the host endosome membrane. In terms of biological role, oligomerizes in the host endoplasmic reticulum into predominantly trimers. In a second time, gp160 transits in the host Golgi, where glycosylation is completed. The precursor is then proteolytically cleaved in the trans-Golgi and thereby activated by cellular furin or furin-like proteases to produce gp120 and gp41. Functionally, attaches the virus to the host lymphoid cell by binding to the primary receptor CD4. This interaction induces a structural rearrangement creating a high affinity binding site for a chemokine coreceptor like CXCR4 and/or CCR5. Acts as a ligand for CD209/DC-SIGN and CLEC4M/DC-SIGNR, which are respectively found on dendritic cells (DCs), and on endothelial cells of liver sinusoids and lymph node sinuses. These interactions allow capture of viral particles at mucosal surfaces by these cells and subsequent transmission to permissive cells. HIV subverts the migration properties of dendritic cells to gain access to CD4+ T-cells in lymph nodes. Virus transmission to permissive T-cells occurs either in trans (without DCs infection, through viral capture and transmission), or in cis (following DCs productive infection, through the usual CD4-gp120 interaction), thereby inducing a robust infection. In trans infection, bound virions remain infectious over days and it is proposed that they are not degraded, but protected in non-lysosomal acidic organelles within the DCs close to the cell membrane thus contributing to the viral infectious potential during DCs' migration from the periphery to the lymphoid tissues. On arrival at lymphoid tissues, intact virions recycle back to DCs' cell surface allowing virus transmission to CD4+ T-cells. Its function is as follows. Acts as a class I viral fusion protein. Under the current model, the protein has at least 3 conformational states: pre-fusion native state, pre-hairpin intermediate state, and post-fusion hairpin state. During fusion of viral and target intracellular membranes, the coiled coil regions (heptad repeats) assume a trimer-of-hairpins structure, positioning the fusion peptide in close proximity to the C-terminal region of the ectodomain. The formation of this structure appears to drive apposition and subsequent fusion of viral and target cell membranes. Complete fusion occurs in host cell endosomes and is dynamin-dependent, however some lipid transfer might occur at the plasma membrane. The virus undergoes clathrin-dependent internalization long before endosomal fusion, thus minimizing the surface exposure of conserved viral epitopes during fusion and reducing the efficacy of inhibitors targeting these epitopes. Membranes fusion leads to delivery of the nucleocapsid into the cytoplasm. The protein is Envelope glycoprotein gp160 of Human immunodeficiency virus type 1 group M subtype H (isolate VI991) (HIV-1).